A 218-amino-acid chain; its full sequence is UPF0502 protein Mmwyl1_3509 (218 aa).

It belongs to the UPF0502 family.

The sequence is that of UPF0502 protein Mmwyl1_3509 from Marinomonas sp. (strain MWYL1).